Here is a 306-residue protein sequence, read N- to C-terminus: UDP-3-O-acyl-N-acetylglucosamine deacetylase (306 aa).

Residues His79, His238, and Asp242 each coordinate Zn(2+). His265 functions as the Proton donor in the catalytic mechanism.

This sequence belongs to the LpxC family. Zn(2+) serves as cofactor.

It carries out the reaction a UDP-3-O-[(3R)-3-hydroxyacyl]-N-acetyl-alpha-D-glucosamine + H2O = a UDP-3-O-[(3R)-3-hydroxyacyl]-alpha-D-glucosamine + acetate. It functions in the pathway glycolipid biosynthesis; lipid IV(A) biosynthesis; lipid IV(A) from (3R)-3-hydroxytetradecanoyl-[acyl-carrier-protein] and UDP-N-acetyl-alpha-D-glucosamine: step 2/6. In terms of biological role, catalyzes the hydrolysis of UDP-3-O-myristoyl-N-acetylglucosamine to form UDP-3-O-myristoylglucosamine and acetate, the committed step in lipid A biosynthesis. The protein is UDP-3-O-acyl-N-acetylglucosamine deacetylase of Shewanella sediminis (strain HAW-EB3).